The primary structure comprises 262 residues: Nodulation protein J (262 aa).

Positions 33–259 constitute an ABC transmembrane type-2 domain; that stretch reads ASLLGHLAEP…FLSTALLRRR (227 aa). Transmembrane regions (helical) follow at residues 35–55, 60–80, 125–145, 148–168, 177–197, and 231–251; these read LLGH…GLGV, VGGV…SAMT, AALA…TQWL, LYAL…GMVV, YFIF…GAVF, and VVDV…PFFL.

It belongs to the ABC-2 integral membrane protein family. Lipooligosaccharide exporter (TC 3.A.1.102) subfamily. In terms of assembly, the complex is composed of two ATP-binding proteins (NodI) and two transmembrane proteins (NodJ).

Its subcellular location is the cell inner membrane. Part of the ABC transporter complex NodIJ involved in the export of the nodulation factors (Nod factors), the bacterial signal molecules that induce symbiosis and subsequent nodulation induction. Nod factors are LCO (lipo-chitin oligosaccharide), a modified beta-1,4-linked N-acetylglucosamine oligosaccharide. This subunit encodes the transporter. The protein is Nodulation protein J (nodJ) of Rhizobium leguminosarum bv. trifolii.